The following is a 154-amino-acid chain: 3-hydroxyacyl-[acyl-carrier-protein] dehydratase FabZ (154 aa).

The active site involves His54.

The protein belongs to the thioester dehydratase family. FabZ subfamily.

The protein localises to the cytoplasm. It catalyses the reaction a (3R)-hydroxyacyl-[ACP] = a (2E)-enoyl-[ACP] + H2O. Functionally, involved in unsaturated fatty acids biosynthesis. Catalyzes the dehydration of short chain beta-hydroxyacyl-ACPs and long chain saturated and unsaturated beta-hydroxyacyl-ACPs. The protein is 3-hydroxyacyl-[acyl-carrier-protein] dehydratase FabZ of Chlamydia abortus (strain DSM 27085 / S26/3) (Chlamydophila abortus).